Reading from the N-terminus, the 202-residue chain is LexA repressor 2 (202 aa).

Residues 28–48 constitute a DNA-binding region (H-T-H motif); that stretch reads LAEISEAFGFASRSVARKHIV. Residues S123 and K160 each act as for autocatalytic cleavage activity in the active site.

This sequence belongs to the peptidase S24 family. As to quaternary structure, homodimer.

It catalyses the reaction Hydrolysis of Ala-|-Gly bond in repressor LexA.. In terms of biological role, represses a number of genes involved in the response to DNA damage (SOS response), including recA and lexA. In the presence of single-stranded DNA, RecA interacts with LexA causing an autocatalytic cleavage which disrupts the DNA-binding part of LexA, leading to derepression of the SOS regulon and eventually DNA repair. This is LexA repressor 2 from Pseudomonas syringae pv. tomato (strain ATCC BAA-871 / DC3000).